A 207-amino-acid polypeptide reads, in one-letter code: Protein lin-7 homolog B (207 aa).

The Kinase interacting site signature appears at 1–13; that stretch reads MAALVEPLGLERD. The region spanning 10–65 is the L27 domain; sequence LERDVSRAVELLERLQRSGELPPQKLQALQRVLQSRFCSAIREVYEQLYDTLDITG. The 83-residue stretch at 93–175 folds into the PDZ domain; that stretch reads VVELPKTDEG…SVKLVVRYTP (83 aa). Residues 187 to 207 are disordered; the sequence is KMRSARRRQQHQSYSSLESRG. Residues 197–207 are compositionally biased toward polar residues; the sequence is HQSYSSLESRG.

Belongs to the lin-7 family. In terms of assembly, forms a complex with CASK and CASKIN1. Component of the brain-specific heterotrimeric complex (LIN-10-LIN-2-LIN-7 complex) composed of at least APBA1, CASK, and LIN7, which associates with the motor protein KIF17 to transport vesicles along microtubules. Forms a heterotrimeric complex composed of MMP5, LIN7B and PATJ; the N-terminal L27 domain of PALS1 interacts with the L27 domain of PATJ and the C-terminal L27 domain of PALS1 interacts with the L27 domain of LIN7B. Forms a heterotrimeric complex with DLG1 and CASK via their L27 domains. Interacts with DLG4 and GRIN2B as well as CDH1 and CTNNB1, the channels KCNJ12/Kir2.2, KCNJ4/Kir2.3 and probably KCNJ2/Kir2.1 and SLC6A12/BGT-1 via its PDZ domain. The association of LIN7A with cadherin and beta-catenin is calcium-dependent, occurs at synaptic junctions and requires the actin cytoskeleton. Interacts with EGFR, ERBB2, ERBB3 and ERBB4 with both PDZ and KID domains. Associates with KIF17 via APBA1. Interacts with ASIC3. Interacts with TOPK. Interacts with RTKN. Interacts with APBA1. Interacts with MPP7. Interacts with DLG2. Interacts with DLG3.

It is found in the cell membrane. It localises to the basolateral cell membrane. The protein resides in the cell junction. Its subcellular location is the postsynaptic density membrane. The protein localises to the tight junction. Plays a role in establishing and maintaining the asymmetric distribution of channels and receptors at the plasma membrane of polarized cells. Forms membrane-associated multiprotein complexes that may regulate delivery and recycling of proteins to the correct membrane domains. The tripartite complex composed of LIN7 (LIN7A, LIN7B or LIN7C), CASK and APBA1 associates with the motor protein KIF17 to transport vesicles containing N-methyl-D-aspartate (NMDA) receptor subunit NR2B along microtubules. This complex may have the potential to couple synaptic vesicle exocytosis to cell adhesion in brain. Ensures the proper localization of GRIN2B (subunit 2B of the NMDA receptor) to neuronal postsynaptic density and may function in localizing synaptic vesicles at synapses where it is recruited by beta-catenin and cadherin. Required to localize Kir2 channels, GABA transporter (SLC6A12) and EGFR/ERBB1, ERBB2, ERBB3 and ERBB4 to the basolateral membrane of epithelial cells. May increase the amplitude of ASIC3 acid-evoked currents by stabilizing the channel at the cell surface. This Homo sapiens (Human) protein is Protein lin-7 homolog B (LIN7B).